A 142-amino-acid chain; its full sequence is Small ribosomal subunit protein uS12 (142 aa).

This sequence belongs to the universal ribosomal protein uS12 family.

In Tetrahymena thermophila, this protein is Small ribosomal subunit protein uS12.